The sequence spans 308 residues: Microtubule integrity protein mal3 (308 aa).

The 102-residue stretch at 2 to 103 (SESRQELLAW…FVQWAKRFWD (102 aa)) folds into the Calponin-homology (CH) domain. Residues 117-162 (RGNRGPANTRVMNSSAGATGPSRRRQVSSGSSTPSMTKSSANNNNV) are disordered. The span at 144–162 (SSGSSTPSMTKSSANNNNV) shows a compositional bias: low complexity. In terms of domain architecture, EB1 C-terminal spans 173–247 (RAKQAQQQIT…LYSTEDGFEL (75 aa)).

Belongs to the MAPRE family. In terms of assembly, interacts with tea2.

It is found in the cytoplasm. It localises to the cytoskeleton. Its function is as follows. May play a role in regulating the integrity of microtubules possibly by influencing their stability. Involved in an anchoring mechanism to maintain tea2 and tip1 at growing microtubule ends. Strongly stimulates the ATPase activity of tea2. In Schizosaccharomyces pombe (strain 972 / ATCC 24843) (Fission yeast), this protein is Microtubule integrity protein mal3 (mal3).